Consider the following 613-residue polypeptide: Vitamin B12 transporter BtuB (613 aa).

Positions M1–A22 are cleaved as a signal peptide. The TonB box signature appears at D29–N36. One can recognise a TBDR plug domain in the interval V41–I154. The TBDR beta-barrel domain occupies Q159–F613. A TonB C-terminal box motif is present at residues H591–F613.

Belongs to the TonB-dependent receptor family. BtuB (TC 1.B.14.3.1) subfamily.

The protein resides in the cell outer membrane. Involved in the active translocation of vitamin B12 (cyanocobalamin) across the outer membrane to the periplasmic space. It derives its energy for transport by interacting with the trans-periplasmic membrane protein TonB. The protein is Vitamin B12 transporter BtuB of Vibrio vulnificus (strain YJ016).